Here is a 189-residue protein sequence, read N- to C-terminus: Lipid A acyltransferase PagP (189 aa).

An N-terminal signal peptide occupies residues 1–24 (MLRRFSLFSLGFLGWLLVSGNASA). Catalysis depends on residues His61, Asp104, and Ser105.

This sequence belongs to the lipid A palmitoyltransferase family. Homodimer.

It localises to the cell outer membrane. The catalysed reaction is a lipid A + a 1,2-diacyl-sn-glycero-3-phosphocholine = a hepta-acyl lipid A + a 2-acyl-sn-glycero-3-phosphocholine. It carries out the reaction a lipid IVA + a 1,2-diacyl-sn-glycero-3-phosphocholine = a lipid IVB + a 2-acyl-sn-glycero-3-phosphocholine. The enzyme catalyses a lipid IIA + a 1,2-diacyl-sn-glycero-3-phosphocholine = a lipid IIB + a 2-acyl-sn-glycero-3-phosphocholine. Functionally, transfers a fatty acid residue from the sn-1 position of a phospholipid to the N-linked hydroxyfatty acid chain on the proximal unit of lipid A or its precursors. The chain is Lipid A acyltransferase PagP from Klebsiella pneumoniae subsp. pneumoniae (strain ATCC 700721 / MGH 78578).